A 221-amino-acid polypeptide reads, in one-letter code: GTP-binding nuclear protein Ran-A1 (221 aa).

The Small GTPase Ran-type domain occupies 10–174 (DYPSFKLVIV…LYLARKLAGD (165 aa)). 21-28 (DGGTGKTT) is a binding site for GTP. A switch-I region spans residues 40–48 (KKYEPTIGV). GTP contacts are provided by residues G71, 125–128 (NKVD), and 153–155 (SAK). Residues 71–87 (GQEKFGGLRDGYYIHGQ) form a switch-II region. Low complexity predominate over residues 199 to 208 (QHEAELAAAA). The interval 199-221 (QHEAELAAAASQPLPDDDDETFD) is disordered.

It belongs to the small GTPase superfamily. Ran family. In terms of assembly, found in a nuclear export complex with RanGTP, exportin and pre-miRNA.

The protein localises to the nucleus. GTP-binding protein involved in nucleocytoplasmic transport. Required for the import of protein into the nucleus and also for RNA export. Involved in chromatin condensation and control of cell cycle. In Nicotiana tabacum (Common tobacco), this protein is GTP-binding nuclear protein Ran-A1 (RAN-A1).